A 417-amino-acid chain; its full sequence is NADH-quinone oxidoreductase subunit D (417 aa).

This sequence belongs to the complex I 49 kDa subunit family. NDH-1 is composed of 14 different subunits. Subunits NuoB, C, D, E, F, and G constitute the peripheral sector of the complex.

It localises to the cell inner membrane. The catalysed reaction is a quinone + NADH + 5 H(+)(in) = a quinol + NAD(+) + 4 H(+)(out). In terms of biological role, NDH-1 shuttles electrons from NADH, via FMN and iron-sulfur (Fe-S) centers, to quinones in the respiratory chain. The immediate electron acceptor for the enzyme in this species is believed to be ubiquinone. Couples the redox reaction to proton translocation (for every two electrons transferred, four hydrogen ions are translocated across the cytoplasmic membrane), and thus conserves the redox energy in a proton gradient. The polypeptide is NADH-quinone oxidoreductase subunit D (Nitrosococcus oceani (strain ATCC 19707 / BCRC 17464 / JCM 30415 / NCIMB 11848 / C-107)).